The following is a 156-amino-acid chain: Ribosomal RNA large subunit methyltransferase H (156 aa).

S-adenosyl-L-methionine contacts are provided by residues leucine 73, glycine 104, and leucine 123–leucine 128.

Belongs to the RNA methyltransferase RlmH family. In terms of assembly, homodimer.

The protein resides in the cytoplasm. The enzyme catalyses pseudouridine(1915) in 23S rRNA + S-adenosyl-L-methionine = N(3)-methylpseudouridine(1915) in 23S rRNA + S-adenosyl-L-homocysteine + H(+). Its function is as follows. Specifically methylates the pseudouridine at position 1915 (m3Psi1915) in 23S rRNA. In Pectobacterium atrosepticum (strain SCRI 1043 / ATCC BAA-672) (Erwinia carotovora subsp. atroseptica), this protein is Ribosomal RNA large subunit methyltransferase H.